A 430-amino-acid chain; its full sequence is Bone morphogenetic protein 7 (430 aa).

Positions 1–29 are cleaved as a signal peptide; that stretch reads MHVRSLRAAAPHSFVALWAPLFLLRSALA. The propeptide occupies 30 to 291; the sequence is DFSLDNEVHS…ATEVHLRSIR (262 aa). N186, N301, N320, and N371 each carry an N-linked (GlcNAc...) asparagine glycan. The disordered stretch occupies residues 290-310; the sequence is IRSTGGKQRSQNRSKTPKNQE. 3 disulfide bridges follow: C329/C395, C358/C427, and C362/C429.

The protein belongs to the TGF-beta family. As to quaternary structure, homodimer; disulfide-linked. Interacts with SOSTDC1. Interacts with TWSG1. Interacts with FBN1 (via N-terminal domain) and FBN2. Interacts with type I receptor ACVR1. Interacts with type II receptor ACVR2A. Interacts with NOG; this interaction inhibits canonical BMP signaling. Interacts with SCUBE3. Interacts with ERFE; the interaction inhibits BMP-induced transcription of HAMP. Interacts with TGFBR3.

It is found in the secreted. Growth factor of the TGF-beta superfamily that plays important role in various biological processes, including embryogenesis, hematopoiesis, neurogenesis and skeletal morphogenesis. Initiates the canonical BMP signaling cascade by associating with type I receptor ACVR1 and type II receptor ACVR2A. Once all three components are bound together in a complex at the cell surface, ACVR2A phosphorylates and activates ACVR1. In turn, ACVR1 propagates signal by phosphorylating SMAD1/5/8 that travel to the nucleus and act as activators and repressors of transcription of target genes. For specific functions such as growth cone collapse in developing spinal neurons and chemotaxis of monocytes, also uses BMPR2 as type II receptor. Can also signal through non-canonical pathways such as P38 MAP kinase signaling cascade that promotes brown adipocyte differentiation through activation of target genes, including members of the SOX family of transcription factors. Promotes the expression of HAMP, this is repressed by its interaction with ERFE. This chain is Bone morphogenetic protein 7 (Bmp7), found in Mus musculus (Mouse).